We begin with the raw amino-acid sequence, 464 residues long: Chitobiosyldiphosphodolichol beta-mannosyltransferase (464 aa).

The Lumenal segment spans residues 1 to 2 (MA). Residues 3–23 (ASCLVLLALCLLLPLLLLGGW) traverse the membrane as a helical segment. Residues 24–99 (KRWRRGRAAR…ELQSLAVGPR (76 aa)) are Cytoplasmic-facing. An intramembrane region (helical) is located at residues 100–120 (VFQYGVKVVLQAMYLLWKLMW). Residues 121–464 (REPGAYIFLQ…QTVLPLVMDT (344 aa)) lie on the Cytoplasmic side of the membrane. A Phosphoserine modification is found at Ser-242. The tract at residues 243–262 (PFRARSEPEDPVTERSAFTE) is disordered.

The protein belongs to the glycosyltransferase group 1 family. Glycosyltransferase 33 subfamily.

Its subcellular location is the endoplasmic reticulum membrane. It carries out the reaction an N,N'-diacetylchitobiosyl-diphospho-di-trans,poly-cis-dolichol + GDP-alpha-D-mannose = a beta-D-Man-(1-&gt;4)-beta-D-GlcNAc-(1-&gt;4)-alpha-D-GlcNAc-diphospho-di-trans,poly-cis-dolichol + GDP + H(+). It functions in the pathway protein modification; protein glycosylation. Mannosyltransferase that operates in the biosynthetic pathway of dolichol-linked oligosaccharides, the glycan precursors employed in protein asparagine (N)-glycosylation. The assembly of dolichol-linked oligosaccharides begins on the cytosolic side of the endoplasmic reticulum membrane and finishes in its lumen. The sequential addition of sugars to dolichol pyrophosphate produces dolichol-linked oligosaccharides containing fourteen sugars, including two GlcNAcs, nine mannoses and three glucoses. Once assembled, the oligosaccharide is transferred from the lipid to nascent proteins by oligosaccharyltransferases. Catalyzes, on the cytoplasmic face of the endoplasmic reticulum, the addition of the first mannose residues to the dolichol-linked oligosaccharide chain, to produce Man1GlcNAc(2)-PP-dolichol core oligosaccharide. Man1GlcNAc(2)-PP-dolichol is a substrate for ALG2, the following enzyme in the biosynthetic pathway. This is Chitobiosyldiphosphodolichol beta-mannosyltransferase from Homo sapiens (Human).